A 103-amino-acid polypeptide reads, in one-letter code: Histone H4 (103 aa).

Residues 1-14 are compositionally biased toward gly residues; that stretch reads MSGRGKGGKGLGKG. The tract at residues 1-20 is disordered; it reads MSGRGKGGKGLGKGGAKRHR. The DNA-binding element occupies 17 to 21; the sequence is KRHRK.

Belongs to the histone H4 family. In terms of assembly, the nucleosome is a histone octamer containing two molecules each of H2A, H2B, H3 and H4 assembled in one H3-H4 heterotetramer and two H2A-H2B heterodimers. The octamer wraps approximately 147 bp of DNA.

Its subcellular location is the nucleus. The protein resides in the chromosome. Functionally, core component of nucleosome. Nucleosomes wrap and compact DNA into chromatin, limiting DNA accessibility to the cellular machineries which require DNA as a template. Histones thereby play a central role in transcription regulation, DNA repair, DNA replication and chromosomal stability. DNA accessibility is regulated via a complex set of post-translational modifications of histones, also called histone code, and nucleosome remodeling. This chain is Histone H4 (H4-I), found in Chlamydomonas reinhardtii (Chlamydomonas smithii).